A 100-amino-acid polypeptide reads, in one-letter code: Urease subunit gamma (100 aa).

This sequence belongs to the urease gamma subunit family. As to quaternary structure, heterotrimer of UreA (gamma), UreB (beta) and UreC (alpha) subunits. Three heterotrimers associate to form the active enzyme.

Its subcellular location is the cytoplasm. It carries out the reaction urea + 2 H2O + H(+) = hydrogencarbonate + 2 NH4(+). The protein operates within nitrogen metabolism; urea degradation; CO(2) and NH(3) from urea (urease route): step 1/1. This is Urease subunit gamma from Paraburkholderia phymatum (strain DSM 17167 / CIP 108236 / LMG 21445 / STM815) (Burkholderia phymatum).